Reading from the N-terminus, the 239-residue chain is Serine protease SplD (239 aa).

The first 36 residues, 1–36 (MNKNIIIKSIAALTILTSITGVGTTVVDGIQQTAKA), serve as a signal peptide directing secretion. Catalysis depends on charge relay system residues histidine 75, aspartate 114, and serine 192.

It belongs to the peptidase S1B family.

The protein localises to the secreted. This Staphylococcus aureus (strain COL) protein is Serine protease SplD (splD).